The primary structure comprises 101 residues: Small ribosomal subunit protein uS14 (101 aa).

It belongs to the universal ribosomal protein uS14 family. In terms of assembly, part of the 30S ribosomal subunit. Contacts proteins S3 and S10.

Functionally, binds 16S rRNA, required for the assembly of 30S particles and may also be responsible for determining the conformation of the 16S rRNA at the A site. The protein is Small ribosomal subunit protein uS14 of Albidiferax ferrireducens (strain ATCC BAA-621 / DSM 15236 / T118) (Rhodoferax ferrireducens).